Consider the following 443-residue polypeptide: UDP-N-acetylmuramate--L-alanine ligase (443 aa).

110-116 (GAHGKTS) serves as a coordination point for ATP.

It belongs to the MurCDEF family.

It is found in the cytoplasm. It catalyses the reaction UDP-N-acetyl-alpha-D-muramate + L-alanine + ATP = UDP-N-acetyl-alpha-D-muramoyl-L-alanine + ADP + phosphate + H(+). Its pathway is cell wall biogenesis; peptidoglycan biosynthesis. In terms of biological role, cell wall formation. This Streptococcus gordonii (strain Challis / ATCC 35105 / BCRC 15272 / CH1 / DL1 / V288) protein is UDP-N-acetylmuramate--L-alanine ligase.